The chain runs to 116 residues: Protein BIC2 (116 aa).

Disordered stretches follow at residues 1–33 and 95–116; these read MKNTNLPEETKEPISPGSSHRKQNKTGTKTCFP and DSGDDAGARGSRPQRLRVESSC.

The protein resides in the nucleus. Its function is as follows. Regulates the blue-light dependent dimerization of CRY2 and formation of photobodies. Inhibits CRY phosphorylation. The sequence is that of Protein BIC2 from Arabidopsis thaliana (Mouse-ear cress).